A 133-amino-acid polypeptide reads, in one-letter code: UPF0225 protein BPP1723 (133 aa).

It belongs to the UPF0225 family.

This is UPF0225 protein BPP1723 from Bordetella parapertussis (strain 12822 / ATCC BAA-587 / NCTC 13253).